The chain runs to 272 residues: MLNADHLHVARDGRAILNDLSIRIAPGCVTALLGRNGAGKSTLLGVLAGDLPAGGLARGATVRGGVALNGEPLHAIDAPRLARLRAVLPQASRPAFAFSAREIVLLGRYPHARRAGALTHADGEIASQALALAGATALEARDVTTLSGGELARVQFARVLAQLWPPPGAAQPPRYLLLDEPTAALDLAHQHQLLDTVRRLSRDWNLGVLTIVHDPNLAARHADRIAMLADGAIVAQGAPADVLRPEPIARCYGFRVRLVDAGDGVAPVIVPA.

Residues 2 to 255 form the ABC transporter domain; it reads LNADHLHVAR…EPIARCYGFR (254 aa). Residue 34–41 coordinates ATP; the sequence is GRNGAGKS.

The protein belongs to the ABC transporter superfamily. Heme (hemin) importer (TC 3.A.1.14.5) family. In terms of assembly, the complex is composed of two ATP-binding proteins (HmuV), two transmembrane proteins (HmuU) and a solute-binding protein (HmuT).

The protein localises to the cell inner membrane. Its function is as follows. Part of the ABC transporter complex HmuTUV involved in hemin import. Responsible for energy coupling to the transport system. This chain is Hemin import ATP-binding protein HmuV, found in Burkholderia pseudomallei (strain 1710b).